The chain runs to 419 residues: Isocitrate dehydrogenase [NADP] 1 (419 aa).

Threonine 105 is a binding site for NADP(+). Positions 114, 116, 120, 130, and 154 each coordinate D-threo-isocitrate. Aspartate 308 is a Mg(2+) binding site. NADP(+) contacts are provided by residues 340–346, asparagine 353, tyrosine 392, and arginine 396; that span reads HGTAPKY.

Belongs to the isocitrate and isopropylmalate dehydrogenases family. In terms of assembly, homodimer. The cofactor is Mg(2+). Mn(2+) serves as cofactor.

It catalyses the reaction D-threo-isocitrate + NADP(+) = 2-oxoglutarate + CO2 + NADPH. Its activity is regulated as follows. IDH activity is not significantly affected by monovalent cations. The combined addition of Mn(2+) and another divalent cation results in the decrease of the activity. In terms of biological role, catalyzes the oxidative decarboxylation of isocitrate to 2-oxoglutarate and carbon dioxide with the concomitant reduction of NADP(+). Cannot use NAD(+). The protein is Isocitrate dehydrogenase [NADP] 1 of Psychrobacter sp. (strain 13A).